A 372-amino-acid polypeptide reads, in one-letter code: 4-hydroxy-3-methylbut-2-en-1-yl diphosphate synthase (flavodoxin) (372 aa).

Residues Cys-270, Cys-273, Cys-305, and Glu-312 each contribute to the [4Fe-4S] cluster site.

Belongs to the IspG family. The cofactor is [4Fe-4S] cluster.

It catalyses the reaction (2E)-4-hydroxy-3-methylbut-2-enyl diphosphate + oxidized [flavodoxin] + H2O + 2 H(+) = 2-C-methyl-D-erythritol 2,4-cyclic diphosphate + reduced [flavodoxin]. Its pathway is isoprenoid biosynthesis; isopentenyl diphosphate biosynthesis via DXP pathway; isopentenyl diphosphate from 1-deoxy-D-xylulose 5-phosphate: step 5/6. Its function is as follows. Converts 2C-methyl-D-erythritol 2,4-cyclodiphosphate (ME-2,4cPP) into 1-hydroxy-2-methyl-2-(E)-butenyl 4-diphosphate. The chain is 4-hydroxy-3-methylbut-2-en-1-yl diphosphate synthase (flavodoxin) from Salmonella paratyphi B (strain ATCC BAA-1250 / SPB7).